A 302-amino-acid chain; its full sequence is Syntaxin-17 (302 aa).

Residue S2 is modified to N-acetylserine. The Cytoplasmic segment spans residues 2-228; the sequence is SEDEEKVKLR…KNLGKAAKYK (227 aa). K41 carries the post-translational modification N6-acetyllysine. Positions 53–123 form a coiled coil; it reads EEHINAGRTV…EELKKQFNDE (71 aa). Y157 carries the post-translational modification Phosphotyrosine; by ABL1. The t-SNARE coiled-coil homology domain occupies 162–224; that stretch reads IPQDQNAAES…EEGTKNLGKA (63 aa). Residues 229 to 249 form a helical membrane-spanning segment; that stretch reads LAALPVAGALIGGMVGGPIGL. A necessary and sufficient for localization to autophagosome region spans residues 229 to 275; the sequence is LAALPVAGALIGGMVGGPIGLLAGFKVAGIAAALGGGVLGFTGGKLI. The Lumenal segment spans residues 250 to 254; sequence LAGFK. The chain crosses the membrane as a helical span at residues 255 to 275; the sequence is VAGIAAALGGGVLGFTGGKLI. Residues 276–302 are Cytoplasmic-facing; the sequence is QRKKQKMMEKLTSSCPDLPSQTDKKCS. S289 is subject to Phosphoserine. An Endoplasmic reticulum retention signal motif is present at residues 299-302; the sequence is KKCS.

This sequence belongs to the syntaxin family. As to quaternary structure, forms a SNARE complex composed of VAMP8, SNAP29 and STX17 involved in fusion of autophagosome with lysosome. Interacts with VAMP7 and VTI1B. Probably interacts with BET1, SCFD1 and SEC22B. Interacts with PTPN2 and ABL1; involved in STX17 phosphorylation. Interacts with COPB1. Interacts with TMED9 and TMED10; the interaction is direct. Interacts with ATG14. Interacts with RUBCNL/PACER; promoting targeting of RUBCNL/PACER to autophagosome. Interacts with VAMP8, SNAP29, VPS39 and VPS41; these interactions are increased in the absence of TMEM39A. Interacts with IRGM; promoting STX17 recruitment to autophagosomes. Interacts with ATG8 proteins GABARAP and MAP1LC3B. Interacts with RNF115; this interaction enhances STX17 stability which in turn promotes autophagosome maturation. Interacts with RAB39A (GTP-bound); the interaction promotes autophagosome-lysosome membrane fusion driven by STX17-SNAP29-VAMP8. Interacts with RAB39B; the interaction may promote a different fonction in autophagy as compared with RAB39A. (Microbial infection) The interactions with VAMP8, SNAP29 and VPS41 are decreased in presence of SARS coronavirus-2/SARS-CoV-2 ORF3A protein. Phosphorylated at Tyr-157 probably by ABL1. Dephosphorylation by PTPN2; regulates exit from the endoplasmic reticulum. Post-translationally, (Microbial infection) Cleaved by the L.pneumophila serine protease Lpg1137, impairing endoplasmic reticulum-mitochondria communication, leading to inhibit autophagy.

The protein localises to the endoplasmic reticulum membrane. Its subcellular location is the smooth endoplasmic reticulum membrane. It is found in the endoplasmic reticulum-Golgi intermediate compartment membrane. It localises to the cytoplasmic vesicle. The protein resides in the autophagosome membrane. The protein localises to the COPII-coated vesicle membrane. Its subcellular location is the cytoplasm. It is found in the cytosol. It localises to the mitochondrion membrane. The protein resides in the autolysosome membrane. SNAREs, soluble N-ethylmaleimide-sensitive factor-attachment protein receptors, are essential proteins for fusion of cellular membranes. SNAREs localized on opposing membranes assemble to form a trans-SNARE complex, an extended, parallel four alpha-helical bundle that drives membrane fusion. STX17 is a SNARE of the autophagosome involved in autophagy through the direct control of autophagosome membrane fusion with the lysosome membrane. May also play a role in the early secretory pathway where it may maintain the architecture of the endoplasmic reticulum-Golgi intermediate compartment/ERGIC and Golgi and/or regulate transport between the endoplasmic reticulum, the ERGIC and the Golgi. The chain is Syntaxin-17 from Homo sapiens (Human).